Consider the following 534-residue polypeptide: MDSLQIPWLTTAIAFPLLAALVIPLIPDKEGKTIRWYTLGVALTDFALLVTAFWQNYDLGRTEFQLTENFAWIPQLGLNWSLGVDGLSMPLIILATLITTLATLAAWNVTKKPKLFAGLILVMLSAQIGVFAVQDLLLFFIMWELELVPVYLLISIWGGKKRLYAATKFILYTALGSVFILASTLALAFYGGDVTFDMQALGLKDYPLALELLAYAGFLIGFGVKLPIFPLHTWLPDAHSEASAPVSMILAGVLLKMGGYGLIRLNMEMLPDAHIRFAPLLIVLGIVNIVYGALTAFGQTNLKRRLASSSISHMGFVLVGIASFTDLGMNGAVLQMLSHGFIAAALFFLSGVTYERTHTLMMDEMSGIARLMPKTFAMFTAAAMASLALPGMSGFVSELTVFLGLSNSDAYSYGFKAIAIFLTAVGVILTPIYLLSMLREVFYGKGSQAPLSLAAGEDAKPREIFVAVCLLAPIIAIGLYPKLATTTYDLKTVEVASKVRAALPLYAEQLPQNGDRQAQMGLSSQMPALIAPRF.

14 consecutive transmembrane segments (helical) span residues 6–26, 34–54, 87–107, 113–133, 136–156, 169–189, 209–229, 243–263, 277–297, 311–331, 332–352, 376–396, 418–438, and 464–484; these read IPWLTTAIAFPLLAALVIPLI, IRWYTLGVALTDFALLVTAFW, LSMPLIILATLITTLATLAAW, PKLFAGLILVMLSAQIGVFAV, LLLFFIMWELELVPVYLLISI, FILYTALGSVFILASTLALAF, ALELLAYAGFLIGFGVKLPIF, SAPVSMILAGVLLKMGGYGLI, FAPLLIVLGIVNIVYGALTAF, ISHMGFVLVGIASFTDLGMNG, AVLQMLSHGFIAAALFFLSGV, FAMFTAAAMASLALPGMSGFV, IAIFLTAVGVILTPIYLLSML, and IFVAVCLLAPIIAIGLYPKLA.

The protein belongs to the complex I subunit 4 family.

It localises to the cellular thylakoid membrane. The catalysed reaction is a plastoquinone + NADH + (n+1) H(+)(in) = a plastoquinol + NAD(+) + n H(+)(out). It catalyses the reaction a plastoquinone + NADPH + (n+1) H(+)(in) = a plastoquinol + NADP(+) + n H(+)(out). Its function is as follows. NDH-1 shuttles electrons from NAD(P)H, via FMN and iron-sulfur (Fe-S) centers, to quinones in the respiratory chain. The immediate electron acceptor for the enzyme in this species is believed to be plastoquinone. Couples the redox reaction to proton translocation (for every two electrons transferred, four hydrogen ions are translocated across the cytoplasmic membrane), and thus conserves the redox energy in a proton gradient. In Picosynechococcus sp. (strain ATCC 27264 / PCC 7002 / PR-6) (Agmenellum quadruplicatum), this protein is NAD(P)H-quinone oxidoreductase chain 4 1.